A 167-amino-acid polypeptide reads, in one-letter code: MICCDKVLSSVQSMPVIDKCSVTKCLQTAKQAVVLALSLFAVFASGSLSILSAAVLFSGTAAVLPYLLILTTALLGCVYAVIVLLRSLSAVVQSCKKRSPEEIEGAARPSDQQESGGRLSEESASPQASPTSSTLRLESAFRSIGDSVSGAFDDINKDNSRSRSRSF.

2 helical membrane-spanning segments follow: residues 33-57 and 63-88; these read VVLALSLFAVFASGSLSILSAAVLF and VLPYLLILTTALLGCVYAVIVLLRSL. The tract at residues 94–167 is sufficient for interaction with human 14-3-3 beta protein; sequence SCKKRSPEEI…DNSRSRSRSF (74 aa). Residues 97 to 167 form a disordered region; the sequence is KRSPEEIEGA…DNSRSRSRSF (71 aa). Over residues 122–135 the composition is skewed to low complexity; that stretch reads ESASPQASPTSSTL. A Phosphorylation-dependent binding motif motif is present at residues 161–166; the sequence is RSRSRS. A Phosphoserine modification is found at Ser166.

In terms of assembly, in infected HeLa cells colocalizes with host 14-3-3 protein (YWHAB); phosphorylation of Ser-166 is probably required. Interacts with Pkn1. In terms of processing, phosphorylated, possibly at more than one position, in infected HeLa cells. Phosphorylated by chlamydial kinase Pnk1.

The protein localises to the secreted. Its subcellular location is the host vacuole. It localises to the host pathogen-containing vacuole. It is found in the host pathogen-containing vacuole membrane. Functionally, inclusion membrane protein probably involved in early modification events of the chlamydial inclusion. The sequence is that of Inclusion membrane protein G from Chlamydia trachomatis serovar L2 (strain ATCC VR-902B / DSM 19102 / 434/Bu).